Here is a 132-residue protein sequence, read N- to C-terminus: Long-chain acyl-CoA thioesterase FadM (132 aa).

Aspartate 13 is a catalytic residue.

The protein belongs to the 4-hydroxybenzoyl-CoA thioesterase family. In terms of assembly, homotetramer.

The enzyme catalyses (3E,5Z)-tetradecadienoyl-CoA + H2O = (3E,5Z)-tetradecadienoate + CoA + H(+). It catalyses the reaction (3E,5Z)-dodecadienoyl-CoA + H2O = (3E,5Z)-dodecadienoate + CoA + H(+). It carries out the reaction (9Z)-octadecenoyl-CoA + H2O = (9Z)-octadecenoate + CoA + H(+). The catalysed reaction is octadecanoyl-CoA + H2O = octadecanoate + CoA + H(+). The enzyme catalyses hexadecanoyl-CoA + H2O = hexadecanoate + CoA + H(+). It catalyses the reaction (3S)-hydroxytetradecanoyl-CoA + H2O = (3S)-hydroxytetradecanoate + CoA + H(+). It carries out the reaction tetradecanoyl-CoA + H2O = tetradecanoate + CoA + H(+). In terms of biological role, long-chain acyl-CoA thioesterase that could be involved in beta-oxidation of fatty acids. Is most active with 3,5-tetradecadienoyl-CoA, a metabolite of oleic acid that is hydrolyzed during oleate beta-oxidation, but can also use other substrates such as 3,5-dodecadienoyl-CoA, 9-cis-octadecenoyl-CoA, octadecanoyl-CoA, hexadecanoyl-CoA, 3-hydroxytetradecanoyl-CoA and tetradecanoyl-CoA. The protein is Long-chain acyl-CoA thioesterase FadM of Escherichia coli (strain K12).